Here is a 146-residue protein sequence, read N- to C-terminus: Copper transporter 5 (146 aa).

Residues 24–44 (WLSYILTLIACFVFSAFYQYL) traverse the membrane as a helical segment. The disordered stretch occupies residues 55–74 (SSSRRAPPPPRSSSGVSAPL). The chain crosses the membrane as a helical span at residues 101 to 121 (LLMLAAMSFNGGVFIAIVVGL).

It belongs to the copper transporter (Ctr) (TC 1.A.56) family. SLC31A subfamily. As to expression, highly expressed in leaves and stems and at lower levels in roots and flowers.

It is found in the membrane. Functionally, involved in the transport of copper. The polypeptide is Copper transporter 5 (COPT5) (Arabidopsis thaliana (Mouse-ear cress)).